The primary structure comprises 379 residues: L-lactate dehydrogenase (379 aa).

Positions 1 to 379 constitute an FMN hydroxy acid dehydrogenase domain; that stretch reads MIISSSTDYR…ISPDSLVRGL (379 aa). Residue Tyr24 participates in substrate binding. FMN contacts are provided by Ser106 and Gln127. Tyr129 is a binding site for substrate. Thr155 contacts FMN. Arg164 serves as a coordination point for substrate. Position 251 (Lys251) interacts with FMN. His275 (proton acceptor) is an active-site residue. Position 278 (Arg278) interacts with substrate. 306-330 serves as a coordination point for FMN; sequence DSGIRSGLDVVRMIAQGADGVLIGR.

It belongs to the FMN-dependent alpha-hydroxy acid dehydrogenase family. The cofactor is FMN.

Its subcellular location is the cell inner membrane. It carries out the reaction (S)-lactate + A = pyruvate + AH2. In terms of biological role, catalyzes the conversion of L-lactate to pyruvate. Is coupled to the respiratory chain. The protein is L-lactate dehydrogenase of Allorhizobium ampelinum (strain ATCC BAA-846 / DSM 112012 / S4) (Agrobacterium vitis (strain S4)).